The following is a 111-amino-acid chain: Ig kappa chain V-III region PC 7175 (111 aa).

Residues 1-23 (DIVLTQSPASLAVSLGQRATISC) form a framework-1 region. Cysteine 23 and cysteine 92 form a disulfide bridge. The complementarity-determining-1 stretch occupies residues 24–38 (RASKSVSTSGYSYMH). The segment at 39-53 (WYQQKPGQPPKLLIY) is framework-2. The segment at 54–60 (LASNLES) is complementarity-determining-2. A framework-3 region spans residues 61-92 (GVPARFSGSGSGTDFTLNIHPVEEEDAATYYC). Residues 93–101 (QHSRELPLT) form a complementarity-determining-3 region. The segment at 102 to 111 (FGAGTKLELK) is framework-4.

The chain is Ig kappa chain V-III region PC 7175 from Mus musculus (Mouse).